The following is a 347-amino-acid chain: NADH-ubiquinone oxidoreductase chain 2 (347 aa).

Helical transmembrane passes span 1-21 (MTPM…TLTL), 26-46 (WLLM…LLTY), 56-76 (AIKY…AASL), 96-116 (GIMT…YWVP), 153-171 (ILLT…NGLN), 178-198 (VMAY…IYFP), 199-219 (TLTT…FTVF), 237-257 (APIM…LPPL), 277-297 (IMAT…MRII), and 326-346 (LPTL…FITL).

Belongs to the complex I subunit 2 family. Core subunit of respiratory chain NADH dehydrogenase (Complex I) which is composed of 45 different subunits. Interacts with TMEM242.

It localises to the mitochondrion inner membrane. The enzyme catalyses a ubiquinone + NADH + 5 H(+)(in) = a ubiquinol + NAD(+) + 4 H(+)(out). Functionally, core subunit of the mitochondrial membrane respiratory chain NADH dehydrogenase (Complex I) which catalyzes electron transfer from NADH through the respiratory chain, using ubiquinone as an electron acceptor. Essential for the catalytic activity and assembly of complex I. The chain is NADH-ubiquinone oxidoreductase chain 2 from Ornithorhynchus anatinus (Duckbill platypus).